The chain runs to 512 residues: Histidine ammonia-lyase (512 aa).

Positions 143–145 (CSG) form a cross-link, 5-imidazolinone (Cys-Gly). Ser144 is subject to 2,3-didehydroalanine (Ser).

It belongs to the PAL/histidase family. In terms of processing, contains an active site 4-methylidene-imidazol-5-one (MIO), which is formed autocatalytically by cyclization and dehydration of residues Cys-Ser-Gly.

It is found in the cytoplasm. It carries out the reaction L-histidine = trans-urocanate + NH4(+). It functions in the pathway amino-acid degradation; L-histidine degradation into L-glutamate; N-formimidoyl-L-glutamate from L-histidine: step 1/3. This is Histidine ammonia-lyase from Streptomyces coelicolor (strain ATCC BAA-471 / A3(2) / M145).